Here is a 482-residue protein sequence, read N- to C-terminus: FAD-linked oxidoreductase alt4 (482 aa).

An FAD-binding PCMH-type domain is found at 53-211 (ERPTYLAIVD…LEATFQVYPQ (159 aa)).

Belongs to the oxygen-dependent FAD-linked oxidoreductase family. It depends on FAD as a cofactor.

Its pathway is secondary metabolite biosynthesis. Its function is as follows. FAD-linked oxidoreductase; part of the gene cluster that mediates the biosynthesis of alternapyrone derivatives. Alternapyrone is a decaketide with octa-methylation from methionine on every C2 unit except the third unit. All the domains in the polyketide synthase alt5 are apparently involved in alternapyrone synthesis, that is, the 8 CMeT, 7 KR, 7 DH, and 4 ER reactions in the 9 KS-mediated condensation steps required for alternapyrone synthesis. the alternapyrone produced by alt5 might be intensively modified by cytochrome P450 monooxygenases alt1, alt2 and alt3 and FAD-dependent oxidoreductase alt4 present in the alt gene cluster. This is FAD-linked oxidoreductase alt4 from Alternaria solani.